The primary structure comprises 426 residues: 3-phosphoshikimate 1-carboxyvinyltransferase (426 aa).

3-phosphoshikimate contacts are provided by lysine 22, serine 23, and arginine 27. Position 22 (lysine 22) interacts with phosphoenolpyruvate. Phosphoenolpyruvate contacts are provided by glycine 96 and arginine 124. 3-phosphoshikimate is bound by residues serine 170, serine 171, glutamine 172, serine 198, aspartate 314, asparagine 337, and lysine 341. Residue glutamine 172 coordinates phosphoenolpyruvate. Aspartate 314 serves as the catalytic Proton acceptor. Residues arginine 345, arginine 387, and lysine 412 each contribute to the phosphoenolpyruvate site.

It belongs to the EPSP synthase family. Monomer.

The protein localises to the cytoplasm. It catalyses the reaction 3-phosphoshikimate + phosphoenolpyruvate = 5-O-(1-carboxyvinyl)-3-phosphoshikimate + phosphate. Its pathway is metabolic intermediate biosynthesis; chorismate biosynthesis; chorismate from D-erythrose 4-phosphate and phosphoenolpyruvate: step 6/7. Its function is as follows. Catalyzes the transfer of the enolpyruvyl moiety of phosphoenolpyruvate (PEP) to the 5-hydroxyl of shikimate-3-phosphate (S3P) to produce enolpyruvyl shikimate-3-phosphate and inorganic phosphate. The polypeptide is 3-phosphoshikimate 1-carboxyvinyltransferase (Shewanella baltica (strain OS195)).